We begin with the raw amino-acid sequence, 189 residues long: ComE operon protein 2 (189 aa).

Residues 5 to 132 (SWNQYFMAQS…PYAQELFEQA (128 aa)) enclose the CMP/dCMP-type deaminase domain. Histidine 70 contacts Zn(2+). Glutamate 72 (proton donor) is an active-site residue. Positions 98 and 101 each coordinate Zn(2+).

It belongs to the cytidine and deoxycytidylate deaminase family. Zn(2+) is required as a cofactor.

Dispensable for transformability. This chain is ComE operon protein 2 (comEB), found in Bacillus subtilis (strain 168).